The sequence spans 139 residues: Arsenate reductase (139 aa).

Catalysis depends on nucleophile residues C10, C82, and C89. Disulfide bonds link C10-C82 and C82-C89.

Belongs to the low molecular weight phosphotyrosine protein phosphatase family. Thioredoxin-coupled ArsC subfamily.

The protein localises to the cytoplasm. The enzyme catalyses arsenate + [thioredoxin]-dithiol + H(+) = arsenite + [thioredoxin]-disulfide + H2O. Catalyzes the reduction of arsenate [As(V)] to arsenite [As(III)]. This is Arsenate reductase from Bacillus licheniformis (strain ATCC 14580 / DSM 13 / JCM 2505 / CCUG 7422 / NBRC 12200 / NCIMB 9375 / NCTC 10341 / NRRL NRS-1264 / Gibson 46).